A 611-amino-acid polypeptide reads, in one-letter code: Dihydroxy-acid dehydratase (611 aa).

Asp-81 lines the Mg(2+) pocket. Position 122 (Cys-122) interacts with [2Fe-2S] cluster. Positions 123 and 124 each coordinate Mg(2+). Lys-124 is subject to N6-carboxylysine. Residue Cys-195 participates in [2Fe-2S] cluster binding. Residue Glu-491 coordinates Mg(2+). The active-site Proton acceptor is Ser-517.

Belongs to the IlvD/Edd family. As to quaternary structure, homodimer. The cofactor is [2Fe-2S] cluster. Mg(2+) serves as cofactor.

It catalyses the reaction (2R)-2,3-dihydroxy-3-methylbutanoate = 3-methyl-2-oxobutanoate + H2O. The catalysed reaction is (2R,3R)-2,3-dihydroxy-3-methylpentanoate = (S)-3-methyl-2-oxopentanoate + H2O. The protein operates within amino-acid biosynthesis; L-isoleucine biosynthesis; L-isoleucine from 2-oxobutanoate: step 3/4. It participates in amino-acid biosynthesis; L-valine biosynthesis; L-valine from pyruvate: step 3/4. Its function is as follows. Functions in the biosynthesis of branched-chain amino acids. Catalyzes the dehydration of (2R,3R)-2,3-dihydroxy-3-methylpentanoate (2,3-dihydroxy-3-methylvalerate) into 2-oxo-3-methylpentanoate (2-oxo-3-methylvalerate) and of (2R)-2,3-dihydroxy-3-methylbutanoate (2,3-dihydroxyisovalerate) into 2-oxo-3-methylbutanoate (2-oxoisovalerate), the penultimate precursor to L-isoleucine and L-valine, respectively. The sequence is that of Dihydroxy-acid dehydratase from Allorhizobium ampelinum (strain ATCC BAA-846 / DSM 112012 / S4) (Agrobacterium vitis (strain S4)).